The primary structure comprises 233 residues: MGRLFVKICGITRQDQAEAIAALGVSALGFIAVPNTPRYLPLSEMARWVGSLPGPVEKVGVFLDQDPRAIAAWVETVGLTAVQLHGQESPQDCQQLGEWLPGIRRIKALRVRQPQDLEVANLYRDCVEMLLLDAYHPQQAGGTGRTLNWPELARLSRERALPLPWLLAGGLNPDNVLQALSHLQPSGIDLSSGVERRPGDKDIDKVRHLLQQLGSQGWEIAPTLPPITPSATG.

Belongs to the TrpF family.

It catalyses the reaction N-(5-phospho-beta-D-ribosyl)anthranilate = 1-(2-carboxyphenylamino)-1-deoxy-D-ribulose 5-phosphate. It functions in the pathway amino-acid biosynthesis; L-tryptophan biosynthesis; L-tryptophan from chorismate: step 3/5. The protein is N-(5'-phosphoribosyl)anthranilate isomerase of Synechococcus sp. (strain JA-2-3B'a(2-13)) (Cyanobacteria bacterium Yellowstone B-Prime).